The primary structure comprises 215 residues: Small ribosomal subunit protein uS3 (215 aa).

Residues 38–107 form the KH type-2 domain; the sequence is IRDYIKKTYH…KFQLNIEEVK (70 aa).

The protein belongs to the universal ribosomal protein uS3 family. Part of the 30S ribosomal subunit. Forms a tight complex with proteins S10 and S14.

Functionally, binds the lower part of the 30S subunit head. Binds mRNA in the 70S ribosome, positioning it for translation. In Kosmotoga olearia (strain ATCC BAA-1733 / DSM 21960 / TBF 19.5.1), this protein is Small ribosomal subunit protein uS3.